Here is a 3175-residue protein sequence, read N- to C-terminus: Replicase polyprotein 1ab (3175 aa).

The C4-type; atypical zinc-finger motif lies at 25 to 44 (CEHGAGLCCEVDGSTLCAEC). A Peptidase C31 domain is found at 66–156 (SPVPVGHKFL…PAANSLIVTT (91 aa)). The Peptidase C32 domain maps to 157-260 (DQEQDGFCWL…WSCLPAGNYG (104 aa)). Catalysis depends on for Nsp1 papain-like cysteine proteinase activity residues cysteine 164 and histidine 230. Residues 261-339 (GYNPPGDGAC…KQHWRVKRAK (79 aa)) form an OTU-like region. The Peptidase C33 domain occupies 261–360 (GYNPPGDGAC…RGICNCQRMS (100 aa)). Residue cysteine 270 is the For Nsp2 cysteine proteinase activity of the active site. Cysteine 319 contacts Zn(2+). Catalysis depends on histidine 332, which acts as the For Nsp2 cysteine proteinase activity. Residues cysteine 349, cysteine 354, and cysteine 356 each contribute to the Zn(2+) site. Residues 386–451 (VVTPEGQPRP…TRLQGASTQE (66 aa)) are disordered. 7 helical membrane passes run 530-550 (AVIA…SFAI), 551-571 (GLIP…SSAN), 625-645 (FDAA…ILYL), 829-849 (LIGG…STFT), 903-923 (YWIA…RLAI), 935-955 (LVLL…SLAG), and 977-997 (LVTM…LMGL). The tract at residues 530 to 645 (AVIACLLPIW…DLCSFAILYL (116 aa)) is HD1. The tract at residues 829–997 (LIGGWIYGIC…ALAVYSLMGL (169 aa)) is HD2. The 204-residue stretch at 1065–1268 (GLFRSPKARG…MLIDGLSNRE (204 aa)) folds into the Peptidase S32 domain. Active-site charge relay system; for 3C-like serine proteinase activity residues include histidine 1103, aspartate 1129, and serine 1184. Helical transmembrane passes span 1291-1311 (AYLP…KSVG), 1333-1353 (CLFH…WFYI), 1355-1375 (AAGT…MLFV), and 1385-1405 (GWAI…AALG). Residues 1291–1405 (AYLPYVLGFF…SITMLAAALG (115 aa)) form an HD3 region. Asparagine 1501 is a glycosylation site (N-linked (GlcNAc...) asparagine; by host). A disordered region spans residues 1577-1614 (NDTPVKPMPSRRRRKGLPKGAQLEWDRHQEEKRNAGDD). Basic and acidic residues predominate over residues 1600–1612 (EWDRHQEEKRNAG). The 168-residue stretch at 1716–1883 (LANPVEAVNQ…DKVAAAVSGD (168 aa)) folds into the NiRAN domain. The 136-residue stretch at 2116-2251 (KYCLETDLES…TTPNQHYAAS (136 aa)) folds into the RdRp catalytic domain. The AV ZBD domain maps to 2371-2438 (SAVCTVCGAA…SPKQMVPKVP (68 aa)). Zn(2+) is bound by residues cysteine 2374, cysteine 2377, cysteine 2387, cysteine 2392, cysteine 2395, histidine 2399, histidine 2402, cysteine 2403, cysteine 2412, histidine 2414, cysteine 2423, and cysteine 2426. The 166-residue stretch at 2496 to 2661 (PGSHIAVPLQ…LRHFVSLEPL (166 aa)) folds into the (+)RNA virus helicase ATP-binding domain. 2528–2535 (GPPGSGKT) contacts ATP. A (+)RNA virus helicase C-terminal domain is found at 2662 to 2793 (RVCHRFGAAV…PPTACHLGQE (132 aa)). The region spanning 2840 to 2930 (KISCLPRVAQ…LTEWVDGKAR (91 aa)) is the AV-Nsp11N/CoV-Nsp15M domain. The region spanning 2932–3054 (LPDSLFSSGR…MVWRNATFYV (123 aa)) is the NendoU domain. Active-site residues include histidine 2963, histidine 2978, and lysine 3007.

Belongs to the arteriviridae polyprotein family. In terms of assembly, nsp1 interacts with cellular transcription cofactor SND1/p100. Specific enzymatic cleavages in vivo by its own proteases yield mature proteins. There are two alternative pathways for processing. Either nsp4-5 is cleaved, which represents the major pathway or the nsp5-6 and nsp6-7 are processed, which represents the minor pathway. The major pathway occurs when nsp2 acts as a cofactor for nsp4.

The protein localises to the host nucleus. It localises to the host cytoplasm. Its subcellular location is the host membrane. It is found in the host perinuclear region. It carries out the reaction RNA(n) + a ribonucleoside 5'-triphosphate = RNA(n+1) + diphosphate. The enzyme catalyses ATP + H2O = ADP + phosphate + H(+). It catalyses the reaction Thiol-dependent hydrolysis of ester, thioester, amide, peptide and isopeptide bonds formed by the C-terminal Gly of ubiquitin (a 76-residue protein attached to proteins as an intracellular targeting signal).. The catalysed reaction is uridylyl-uridylyl-ribonucleotide-RNA = a 3'-end uridylyl-2',3'-cyclophospho-uridine-RNA + a 5'-end dephospho-ribonucleoside-RNA. Its function is as follows. The replicase polyprotein 1ab is a multifunctional protein: it contains the activities necessary for the transcription of negative stranded RNA, leader RNA, subgenomic mRNAs and progeny virion RNA as well as proteinases responsible for the cleavage of the polyprotein into functional products. In terms of biological role, nsp1 is essential for viral subgenomic mRNA synthesis. Nsp2 cysteine proteinase which cleaves the nsp2/nsp3 site in the polyprotein. Also displays deubiquitinating and deISGylase activities. The deubiquitinating activity cleaves both ubiquitinated and ISGylated products and may therefore regulate ubiquitin and ISG15 dependent host innate immunity. Functionally, the 3C-like serine proteinase chain is responsible for the majority of cleavages as it cleaves the C-terminus of the polyprotein. Its function is as follows. The helicase chain, which contains a zinc finger structure, displays RNA and DNA duplex-unwinding activities with 5' to 3' polarity. In terms of biological role, plays a role in viral transcription/replication and prevents the simultaneous activation of host cell dsRNA sensors, such as MDA5/IFIH1, OAS, and PKR. Acts by degrading the 5'-polyuridines generated during replication of the poly(A) region of viral genomic and subgenomic RNAs. Catalyzes a two-step reaction in which a 2'3'-cyclic phosphate (2'3'-cP) is first generated by 2'-O transesterification, which is then hydrolyzed to a 3'-phosphate (3'-P). If not degraded, poly(U) RNA would hybridize with poly(A) RNA tails and activate host dsRNA sensors. This is Replicase polyprotein 1ab (rep) from Equidae (horses).